Here is a 252-residue protein sequence, read N- to C-terminus: Metalloprotease LoiP (252 aa).

Positions Met1 to Gly18 are cleaved as a signal peptide. The N-palmitoyl cysteine moiety is linked to residue Cys19. Cys19 is lipidated: S-diacylglycerol cysteine. A disulfide bond links Cys53 and Cys108. His130 lines the Zn(2+) pocket. The active site involves Glu131. Residues His134 and Glu189 each coordinate Zn(2+). Residues Arg224 to Lys252 form a disordered region.

This sequence belongs to the peptidase M48B family. Interacts with Era and BepA. It depends on Zn(2+) as a cofactor. Post-translationally, the intramolecular disulfide bond improves the stability and the activity of LoiP. It forms even in the absence of the oxido-reductase DsbA.

It is found in the cell outer membrane. Metalloprotease that cleaves substrates preferentially between Phe-Phe residues. Plays a role in response to some stress conditions. Seems to regulate the expression of speB. This is Metalloprotease LoiP (loiP) from Escherichia coli (strain K12).